The primary structure comprises 334 residues: Beta-glucanase (334 aa).

Positions 1 to 27 (MKNRVISLLMASLLLVLSVIVAPFYKA) are cleaved as a signal peptide. Residues 28 to 248 (EAATVVNTPF…YVKYYPNGVP (221 aa)) form the GH16 domain. The active-site Nucleophile is E136. Residue E140 is the Proton donor of the active site. The 68-residue stretch at 267–334 (NLPLKGDVNG…RYLIRAIPSL (68 aa)) folds into the Dockerin domain.

The protein belongs to the glycosyl hydrolase 16 family. As to quaternary structure, may form part of a multienzyme complex (cellulosome).

The enzyme catalyses Hydrolysis of (1-&gt;4)-beta-D-glucosidic linkages in beta-D-glucans containing (1-&gt;3)- and (1-&gt;4)-bonds.. The polypeptide is Beta-glucanase (licB) (Acetivibrio thermocellus (strain ATCC 27405 / DSM 1237 / JCM 9322 / NBRC 103400 / NCIMB 10682 / NRRL B-4536 / VPI 7372) (Clostridium thermocellum)).